The sequence spans 173 residues: MYSFMGGGLFCAWVGTILLVVAMATDHWMQYRLSGSFAHQGLWRYCLGNKCYLQTDSIAYWNATRAFMILSALCAISGIIMGIMAFAHQPTFSRISRPFSAGIMFFSSTLFVVLALAIYTGVTVSFLGRRFGDWRFSWSYILGWVAVLMTFFAGIFYMCAYRVHECRRLSTPR.

The Cytoplasmic portion of the chain corresponds to Met-1–Ser-3. Residues Phe-4–Ala-24 traverse the membrane as a helical segment. The Extracellular segment spans residues Thr-25 to Ala-66. Trp-43 and Trp-61 each carry a C-linked (Man) tryptophan glycan. Asn-62 carries an N-linked (GlcNAc...) asparagine glycan. Residues Phe-67–Ala-87 traverse the membrane as a helical segment. At His-88–Pro-98 the chain is on the cytoplasmic side. A helical membrane pass occupies residues Phe-99 to Tyr-119. Residues Thr-120–Tyr-140 are Extracellular-facing. The helical transmembrane segment at Ile-141 to Tyr-161 threads the bilayer. The Cytoplasmic portion of the chain corresponds to Arg-162 to Arg-173. The residue at position 170 (Ser-170) is a Phosphoserine. Thr-171 carries the phosphothreonine modification.

This sequence belongs to the PMP-22/EMP/MP20 family. As to quaternary structure, seems to be associated with itself or another lens membrane component via disulfide bonds. As to expression, eye lens specific.

Its subcellular location is the membrane. Functionally, present in the thicker 16-17 nm junctions of mammalian lens fiber cells, where it may contribute to cell junctional organization. Acts as a receptor for calmodulin. May play an important role in both lens development and cataractogenesis. This Homo sapiens (Human) protein is Lens fiber membrane intrinsic protein (LIM2).